Here is a 90-residue protein sequence, read N- to C-terminus: Molybdopterin synthase sulfur carrier subunit (90 aa).

Gly-90 carries the 1-thioglycine; alternate modification. The residue at position 90 (Gly-90) is a Glycyl adenylate; alternate.

The protein belongs to the MoaD family. MOCS2A subfamily. Heterotetramer; composed of 2 small (Mocs2A) and 2 large (Mocs2B) subunits. In terms of processing, C-terminal thiocarboxylation occurs in 2 steps, it is first acyl-adenylated (-COAMP) via the hesA/moeB/thiF part of MOCS3, then thiocarboxylated (-COSH) via the rhodanese domain of MOCS3.

It is found in the cytoplasm. The protein operates within cofactor biosynthesis; molybdopterin biosynthesis. Acts as a sulfur carrier required for molybdopterin biosynthesis. Component of the molybdopterin synthase complex that catalyzes the conversion of precursor Z into molybdopterin by mediating the incorporation of 2 sulfur atoms into precursor Z to generate a dithiolene group. In the complex, serves as sulfur donor by being thiocarboxylated (-COSH) at its C-terminus by MOCS3. After interaction with Mocs2B, the sulfur is then transferred to precursor Z to form molybdopterin. This chain is Molybdopterin synthase sulfur carrier subunit, found in Drosophila ananassae (Fruit fly).